Consider the following 217-residue polypeptide: MTAPLTLALSKGRIFEETLPLLAAAGVQVTEDPETSRKLILPTTNPDLRVIIVRASDVPTYVEYGAADFGVAGKDVLVEHGGSGLYQPIDLNIARCRMSVAVSAGFDYASAVRQGARLRVATKYVETAREHFAAKGVHVDLIKLYGSMELAPLVGLADAIVDLVSSGGTLKANNLVEVEEIMAISSRLVVNQAALKLKRTALKPILDAFERASQNGG.

Belongs to the ATP phosphoribosyltransferase family. Short subfamily. Heteromultimer composed of HisG and HisZ subunits.

Its subcellular location is the cytoplasm. It carries out the reaction 1-(5-phospho-beta-D-ribosyl)-ATP + diphosphate = 5-phospho-alpha-D-ribose 1-diphosphate + ATP. Its pathway is amino-acid biosynthesis; L-histidine biosynthesis; L-histidine from 5-phospho-alpha-D-ribose 1-diphosphate: step 1/9. In terms of biological role, catalyzes the condensation of ATP and 5-phosphoribose 1-diphosphate to form N'-(5'-phosphoribosyl)-ATP (PR-ATP). Has a crucial role in the pathway because the rate of histidine biosynthesis seems to be controlled primarily by regulation of HisG enzymatic activity. This chain is ATP phosphoribosyltransferase, found in Burkholderia lata (strain ATCC 17760 / DSM 23089 / LMG 22485 / NCIMB 9086 / R18194 / 383).